The primary structure comprises 340 residues: ATP-dependent 6-phosphofructokinase (340 aa).

An ATP-binding site is contributed by Gly11. ADP is bound at residue 21–25 (RAVVR). ATP contacts are provided by residues 72–73 (RY) and 102–105 (GDGS). Asp103 contributes to the Mg(2+) binding site. Residue 125 to 127 (TID) participates in substrate binding. The Proton acceptor role is filled by Asp127. Arg154 lines the ADP pocket. Residues Arg162 and 169–171 (MGR) contribute to the substrate site. Residues 185–187 (GAD), Lys211, and 213–215 (KNH) each bind ADP. Substrate is bound by residues Glu222, Arg244, and 250-253 (HIQR).

This sequence belongs to the phosphofructokinase type A (PFKA) family. ATP-dependent PFK group I subfamily. Prokaryotic clade 'B1' sub-subfamily. Homotetramer. Mg(2+) serves as cofactor.

Its subcellular location is the cytoplasm. The catalysed reaction is beta-D-fructose 6-phosphate + ATP = beta-D-fructose 1,6-bisphosphate + ADP + H(+). It participates in carbohydrate degradation; glycolysis; D-glyceraldehyde 3-phosphate and glycerone phosphate from D-glucose: step 3/4. With respect to regulation, allosterically activated by ADP and other diphosphonucleosides, and allosterically inhibited by phosphoenolpyruvate. Its function is as follows. Catalyzes the phosphorylation of D-fructose 6-phosphate to fructose 1,6-bisphosphate by ATP, the first committing step of glycolysis. This is ATP-dependent 6-phosphofructokinase from Lactococcus lactis subsp. lactis (Streptococcus lactis).